Consider the following 148-residue polypeptide: UPF0260 protein mll2411 (148 aa).

The protein belongs to the UPF0260 family.

In Mesorhizobium japonicum (strain LMG 29417 / CECT 9101 / MAFF 303099) (Mesorhizobium loti (strain MAFF 303099)), this protein is UPF0260 protein mll2411.